Reading from the N-terminus, the 223-residue chain is DNA mismatch repair protein MutH (223 aa).

Belongs to the MutH family.

The protein localises to the cytoplasm. Functionally, sequence-specific endonuclease that cleaves unmethylated GATC sequences. It is involved in DNA mismatch repair. This Shewanella baltica (strain OS195) protein is DNA mismatch repair protein MutH.